A 102-amino-acid chain; its full sequence is MAGQKIRIRLKSYDHSVIDSSARKIVDTVTRAGATVVGPVPLPTEKNVICVIRSPHKYKDSREHFEMRTHKRLIDIVDPTPKAVDSLMRLDLPADVNIEIKL.

Belongs to the universal ribosomal protein uS10 family. Part of the 30S ribosomal subunit.

Functionally, involved in the binding of tRNA to the ribosomes. The polypeptide is Small ribosomal subunit protein uS10 (Clavibacter michiganensis subsp. michiganensis (strain NCPPB 382)).